The primary structure comprises 179 residues: Large ribosomal subunit protein uL5 (179 aa).

It belongs to the universal ribosomal protein uL5 family. Part of the 50S ribosomal subunit; part of the 5S rRNA/L5/L18/L25 subcomplex. Contacts the 5S rRNA and the P site tRNA. Forms a bridge to the 30S subunit in the 70S ribosome.

Its function is as follows. This is one of the proteins that bind and probably mediate the attachment of the 5S RNA into the large ribosomal subunit, where it forms part of the central protuberance. In the 70S ribosome it contacts protein S13 of the 30S subunit (bridge B1b), connecting the 2 subunits; this bridge is implicated in subunit movement. Contacts the P site tRNA; the 5S rRNA and some of its associated proteins might help stabilize positioning of ribosome-bound tRNAs. The sequence is that of Large ribosomal subunit protein uL5 from Exiguobacterium sp. (strain ATCC BAA-1283 / AT1b).